The sequence spans 127 residues: Glycine cleavage system H protein (127 aa).

Residues 22 to 104 (QVVIGITHFA…YEGAWMVKVE (83 aa)) form the Lipoyl-binding domain. The residue at position 63 (Lys63) is an N6-lipoyllysine.

It belongs to the GcvH family. The glycine cleavage system is composed of four proteins: P, T, L and H. The cofactor is (R)-lipoate.

Functionally, the glycine cleavage system catalyzes the degradation of glycine. The H protein shuttles the methylamine group of glycine from the P protein to the T protein. In terms of biological role, is also involved in protein lipoylation via its role as an octanoyl/lipoyl carrier protein intermediate. This is Glycine cleavage system H protein from Bacillus cytotoxicus (strain DSM 22905 / CIP 110041 / 391-98 / NVH 391-98).